The following is a 379-amino-acid chain: DnaJ homolog subfamily B member 14 (379 aa).

The Cytoplasmic portion of the chain corresponds to Met-1–Asp-244. Positions Thr-56–Lys-90 are disordered. Residues Asn-108 to Gly-172 form the J domain. The chain crosses the membrane as a helical span at residues Gly-245–Leu-265. Residues Ser-266–Gly-379 lie on the Lumenal side of the membrane.

It belongs to the DnaJ family. DNAJB12/DNAJB14 subfamily. As to quaternary structure, interacts (via J domain) with HSPA8/Hsc70. Forms a multiprotein complex, at least composed of DNAJB12, DNAJB14, HSPA8/Hsc70 and SGTA; interaction with DNAJB14 and HSPA8/Hsc70 is direct.

It localises to the endoplasmic reticulum membrane. Its subcellular location is the nucleus membrane. Its function is as follows. Acts as a co-chaperone with HSPA8/Hsc70; required to promote protein folding and trafficking, prevent aggregation of client proteins, and promote unfolded proteins to endoplasmic reticulum-associated degradation (ERAD) pathway. Acts by determining HSPA8/Hsc70's ATPase and polypeptide-binding activities. Can also act independently of HSPA8/Hsc70: together with DNAJB12, acts as a chaperone that promotes maturation of potassium channels KCND2 and KCNH2 by stabilizing nascent channel subunits and assembling them into tetramers. While stabilization of nascent channel proteins is dependent on HSPA8/Hsc70, the process of oligomerization of channel subunits is independent of HSPA8/Hsc70. When overexpressed, forms membranous structures together with DNAJB12 and HSPA8/Hsc70 within the nucleus; the role of these structures, named DJANGOs, is still unclear. In Mus musculus (Mouse), this protein is DnaJ homolog subfamily B member 14.